We begin with the raw amino-acid sequence, 364 residues long: MLIFPLINDTSRKIIHIDMDAFFASVEERDNPSLKGKPVIIGSDPRKTGGRGVVSTCNYEARKFGVHSAMSSKEAYERCPQAIFISGNYQKYRQVGMEVRDIFKKYTDLVEPMSIDEAYLDVTENKMGIKSAVKLAKMIQYDIWNDVHLTCSAGISYNKFLAKLASDFEKPKGLTLILPDQAQDFLKPLPIEKFHGVGKRSVEKLHALGVYTGEDLLSLSEISLIDMFGRFGYDLYRKARGINASPVKPDRVRKSIGSEKTYGKLLYNEADIKAEISKNVQRVVASLEKNKKVGKTIVLKVRYADFETLTKRMTLEEYTQDFQIIDQVAKAIFDTLEESVFGIRLLGVTVTTLENEHEAIYLDF.

The UmuC domain maps to 14–198 (IIHIDMDAFF…LPIEKFHGVG (185 aa)). The Mg(2+) site is built by D18 and D116. E117 is a catalytic residue.

It belongs to the DNA polymerase type-Y family. Monomer. Requires Mg(2+) as cofactor.

Its subcellular location is the cytoplasm. The catalysed reaction is DNA(n) + a 2'-deoxyribonucleoside 5'-triphosphate = DNA(n+1) + diphosphate. Functionally, poorly processive, error-prone DNA polymerase involved in untargeted mutagenesis. Copies undamaged DNA at stalled replication forks, which arise in vivo from mismatched or misaligned primer ends. These misaligned primers can be extended by PolIV. Exhibits no 3'-5' exonuclease (proofreading) activity. May be involved in translesional synthesis, in conjunction with the beta clamp from PolIII. In Streptococcus agalactiae serotype Ia (strain ATCC 27591 / A909 / CDC SS700), this protein is DNA polymerase IV.